Consider the following 159-residue polypeptide: 2-C-methyl-D-erythritol 2,4-cyclodiphosphate synthase (159 aa).

A divalent metal cation-binding residues include Asp-10 and His-12. Residues Asp-10–His-12 and His-36–Ser-37 each bind 4-CDP-2-C-methyl-D-erythritol 2-phosphate. Position 44 (His-44) interacts with a divalent metal cation. Residues Asp-58 to Gly-60, Phe-63 to Asp-67, Ala-102 to Ala-108, Thr-134 to Glu-137, Phe-141, Phe-141 to Arg-144, and Arg-144 contribute to the 4-CDP-2-C-methyl-D-erythritol 2-phosphate site.

Belongs to the IspF family. In terms of assembly, homotrimer. A divalent metal cation serves as cofactor.

The catalysed reaction is 4-CDP-2-C-methyl-D-erythritol 2-phosphate = 2-C-methyl-D-erythritol 2,4-cyclic diphosphate + CMP. Its pathway is isoprenoid biosynthesis; isopentenyl diphosphate biosynthesis via DXP pathway; isopentenyl diphosphate from 1-deoxy-D-xylulose 5-phosphate: step 4/6. Its function is as follows. Involved in the biosynthesis of isopentenyl diphosphate (IPP) and dimethylallyl diphosphate (DMAPP), two major building blocks of isoprenoid compounds. Catalyzes the conversion of 4-diphosphocytidyl-2-C-methyl-D-erythritol 2-phosphate (CDP-ME2P) to 2-C-methyl-D-erythritol 2,4-cyclodiphosphate (ME-CPP) with a corresponding release of cytidine 5-monophosphate (CMP). This Shewanella oneidensis (strain ATCC 700550 / JCM 31522 / CIP 106686 / LMG 19005 / NCIMB 14063 / MR-1) protein is 2-C-methyl-D-erythritol 2,4-cyclodiphosphate synthase.